We begin with the raw amino-acid sequence, 470 residues long: Maltose fermentation regulatory protein YPR196W (470 aa).

Residues 8 to 34 (CDCCRVRRVKCDRNRPCDRCRQRNLRC) constitute a DNA-binding region (zn(2)-C6 fungal-type). The short motif at 41–49 (RKRGPKSIG) is the Nuclear localization signal element.

Belongs to the MAL13 family.

The protein resides in the nucleus. May regulate the transcription of maltase and maltose permease genes. The protein is Maltose fermentation regulatory protein YPR196W of Saccharomyces cerevisiae (strain ATCC 204508 / S288c) (Baker's yeast).